The sequence spans 302 residues: MSLPDATVVKAFLLDLQHRICAGLEQLDGQASFAADSWTRAEGGGGTSRVLTQGAVFEQAGVNFSHVTGAAMPASATAHRPELAGRSFEAMGVSLVIHPKNPYIPTTHANVRFFIAHKDGAEPVWWFGGGFDLTPYYPFEEDVREWHQSAKNLCQPFGDDVYPKYKKWCDEYFFLPHRNETRGVGGLFFDDLNQAGFDKSFDFMQAVGNGFLTAYAPIVERRKDTDYGERERDFQLYRRGRYVEFNLVYDRGTLFGLQTGGRTESILMSMPPLVRWQYAYTPAAGSPEADLYDNYLKPRDWV.

S94 is a substrate binding site. Residues H98 and H108 each contribute to the a divalent metal cation site. Residue H108 is the Proton donor of the active site. 110 to 112 (NVR) serves as a coordination point for substrate. H147 and H177 together coordinate a divalent metal cation. Residues 242–277 (YVEFNLVYDRGTLFGLQTGGRTESILMSMPPLVRWQ) form an important for dimerization region. 260–262 (GGR) contributes to the substrate binding site.

It belongs to the aerobic coproporphyrinogen-III oxidase family. Homodimer. A divalent metal cation is required as a cofactor.

The protein resides in the cytoplasm. It catalyses the reaction coproporphyrinogen III + O2 + 2 H(+) = protoporphyrinogen IX + 2 CO2 + 2 H2O. Its pathway is porphyrin-containing compound metabolism; protoporphyrin-IX biosynthesis; protoporphyrinogen-IX from coproporphyrinogen-III (O2 route): step 1/1. In terms of biological role, involved in the heme biosynthesis. Catalyzes the aerobic oxidative decarboxylation of propionate groups of rings A and B of coproporphyrinogen-III to yield the vinyl groups in protoporphyrinogen-IX. The protein is Oxygen-dependent coproporphyrinogen-III oxidase of Shewanella oneidensis (strain ATCC 700550 / JCM 31522 / CIP 106686 / LMG 19005 / NCIMB 14063 / MR-1).